A 323-amino-acid chain; its full sequence is UDP-galactose/UDP-glucose transporter 7 (323 aa).

The Cytoplasmic portion of the chain corresponds to 1 to 10; that stretch reads MEVQAEMEPT. The helical transmembrane segment at 11–31 threads the bilayer; it reads SSISLVAAVSYGIASMAMVFI. Over 32–35 the chain is Lumenal; it reads NKAV. The helical transmembrane segment at 36-58 threads the bilayer; that stretch reads IMQYPHSMTVLTLQQLATSLLIH. At 59–78 the chain is on the cytoplasmic side; that stretch reads FGRRMGYTRAKGIDMATAKK. A helical transmembrane segment spans residues 79–97; it reads LLPVSIFYNANVAFALASL. At 98–101 the chain is on the lumenal side; sequence KGVN. The chain crosses the membrane as a helical span at residues 102–124; sequence IPMYIAIKRLTPLAVLISGVLFG. Residues 125 to 132 are Cytoplasmic-facing; the sequence is KGKPTTQV. Residues 133 to 153 form a helical membrane-spanning segment; it reads ALSVLLTAAGCVIAALGDFSF. A topological domain (lumenal) is located at residue aspartate 154. Residues 155 to 175 traverse the membrane as a helical segment; that stretch reads LFGYGLALTSVFFQTMYLVLV. The Cytoplasmic segment spans residues 176–186; it reads EKSGAEDGLSS. A helical transmembrane segment spans residues 187-207; that stretch reads IEIMFYNSFLSLPFLSILIIV. Topologically, residues 208–226 are lumenal; the sequence is TGEFPNSLSLLLAKCSYLP. A helical membrane pass occupies residues 227-247; it reads FLVILILSLVMGIVLNFTMFL. At 248–252 the chain is on the cytoplasmic side; it reads CTIVN. A helical membrane pass occupies residues 253-275; the sequence is SALTTTIVGVLKGVGSTTLGFVL. Over 276 to 278 the chain is Lumenal; the sequence is LGG. A helical membrane pass occupies residues 279 to 301; that stretch reads VEVHALNVSGLVVNTAGGVWYSY. Residues 302–323 lie on the Cytoplasmic side of the membrane; it reads AKYRQKKAKPAKLMSDLEAHKK.

This sequence belongs to the TPT transporter family. UGnT (TC 2.A.7.15) subfamily. As to expression, widely expressed with highest expression in roots.

It is found in the golgi apparatus membrane. Functionally, nucleotide-sugar transporter that transports UDP-glucose and UDP-galactose. Plays a role in lateral root and root hair development. The protein is UDP-galactose/UDP-glucose transporter 7 of Arabidopsis thaliana (Mouse-ear cress).